Here is a 149-residue protein sequence, read N- to C-terminus: Putative prefoldin subunit alpha (149 aa).

Belongs to the prefoldin subunit alpha family.

Its subcellular location is the cytoplasm. Molecular chaperone capable of stabilizing a range of proteins. In Aquifex aeolicus (strain VF5), this protein is Putative prefoldin subunit alpha.